Here is a 66-residue protein sequence, read N- to C-terminus: Period circadian protein (66 aa).

Residues 1 to 66 (EGSGGSGSSG…VTLTESLLNK (66 aa)) form a disordered region. Residues 9–31 (SGNFTTGSNIHMSSVTNTSNAGT) are compositionally biased toward low complexity. 4 repeat units span residues 30 to 31 (GT), 32 to 33 (GT), 35 to 36 (GT), and 37 to 38 (GN). Residues 30–53 (GTGTSGTGNSGGGSGGGTGPGSGA) are 4 X 2 AA tandem repeats of G-[TN]. Over residues 32 to 51 (GTSGTGNSGGGSGGGTGPGS) the composition is skewed to gly residues.

In terms of assembly, forms a heterodimer with timeless (TIM); the complex then translocates into the nucleus. Phosphorylated with a circadian rhythmicity, probably by the double-time protein (dbt). Phosphorylation could be implicated in the stability of per monomer and in the formation of heterodimer per-tim.

The protein resides in the nucleus. The protein localises to the cytoplasm. It is found in the perinuclear region. In terms of biological role, essential for biological clock functions. Determines the period length of circadian and ultradian rhythms; an increase in PER dosage leads to shortened circadian rhythms and a decrease leads to lengthened circadian rhythms. Essential for the circadian rhythmicity of locomotor activity, eclosion behavior, and for the rhythmic component of the male courtship song that originates in the thoracic nervous system. The biological cycle depends on the rhythmic formation and nuclear localization of the TIM-PER complex. Light induces the degradation of TIM, which promotes elimination of PER. Nuclear activity of the heterodimer coordinatively regulates PER and TIM transcription through a negative feedback loop. Behaves as a negative element in circadian transcriptional loop. Does not appear to bind DNA, suggesting indirect transcriptional inhibition. The sequence is that of Period circadian protein (per) from Drosophila saltans (Fruit fly).